Here is a 639-residue protein sequence, read N- to C-terminus: ATP-dependent zinc metalloprotease FtsH (639 aa).

At 1-20 (MNGNNNMNNNGKSNNKKKNK) the chain is on the cytoplasmic side. The chain crosses the membrane as a helical span at residues 21–41 (NWILGLVVVFLISAIFMSYFI). The Periplasmic portion of the chain corresponds to 42 to 120 (RGGESYKNVP…LSSGKSQASL (79 aa)). A helical membrane pass occupies residues 121–141 (IGVLLQTLPWILFFIFFFFIF). Topologically, residues 142–639 (RQTQGGGGKV…KEVKGEDVKG (498 aa)) are cytoplasmic. Residue 212–219 (GSPGTGKT) coordinates ATP. His434 provides a ligand contact to Zn(2+). Glu435 is a catalytic residue. Residues His438 and Asp510 each coordinate Zn(2+).

The protein in the central section; belongs to the AAA ATPase family. In the C-terminal section; belongs to the peptidase M41 family. In terms of assembly, homohexamer. Requires Zn(2+) as cofactor.

It is found in the cell inner membrane. Acts as a processive, ATP-dependent zinc metallopeptidase for both cytoplasmic and membrane proteins. Plays a role in the quality control of integral membrane proteins. This is ATP-dependent zinc metalloprotease FtsH from Borreliella burgdorferi (strain ZS7) (Borrelia burgdorferi).